A 464-amino-acid polypeptide reads, in one-letter code: tRNA modification GTPase MnmE (464 aa).

The (6S)-5-formyl-5,6,7,8-tetrahydrofolate site is built by Arg27, Glu89, and Arg128. The region spanning 225 to 384 (GLATAIIGHP…LEDRIAAMFF (160 aa)) is the TrmE-type G domain. K(+) is bound at residue Asn235. GTP contacts are provided by residues 235-240 (NVGKSS), 254-260 (TDVAGTT), and 279-282 (DTAG). Residue Ser239 coordinates Mg(2+). Positions 254, 256, and 259 each coordinate K(+). Residue Thr260 coordinates Mg(2+). Residue Lys464 coordinates (6S)-5-formyl-5,6,7,8-tetrahydrofolate.

It belongs to the TRAFAC class TrmE-Era-EngA-EngB-Septin-like GTPase superfamily. TrmE GTPase family. As to quaternary structure, homodimer. Heterotetramer of two MnmE and two MnmG subunits. It depends on K(+) as a cofactor.

Its subcellular location is the cytoplasm. In terms of biological role, exhibits a very high intrinsic GTPase hydrolysis rate. Involved in the addition of a carboxymethylaminomethyl (cmnm) group at the wobble position (U34) of certain tRNAs, forming tRNA-cmnm(5)s(2)U34. In Pediococcus pentosaceus (strain ATCC 25745 / CCUG 21536 / LMG 10740 / 183-1w), this protein is tRNA modification GTPase MnmE.